A 194-amino-acid chain; its full sequence is Holliday junction branch migration complex subunit RuvA (194 aa).

Residues 1 to 63 (MFEYLKGTVA…EDELSLYGFM (63 aa)) form a domain I region. Residues 64 to 142 (SIEELDMFQK…KTNVVYDYTL (79 aa)) form a domain II region. A flexible linker region spans residues 143–151 (FNDDHKDDD). The interval 151 to 194 (DEAVQALMALGYSKLESEKAVEAVRDMSLGTEDVIKRALKWLMK) is domain III.

The protein belongs to the RuvA family. Homotetramer. Forms an RuvA(8)-RuvB(12)-Holliday junction (HJ) complex. HJ DNA is sandwiched between 2 RuvA tetramers; dsDNA enters through RuvA and exits via RuvB. An RuvB hexamer assembles on each DNA strand where it exits the tetramer. Each RuvB hexamer is contacted by two RuvA subunits (via domain III) on 2 adjacent RuvB subunits; this complex drives branch migration. In the full resolvosome a probable DNA-RuvA(4)-RuvB(12)-RuvC(2) complex forms which resolves the HJ.

It is found in the cytoplasm. Functionally, the RuvA-RuvB-RuvC complex processes Holliday junction (HJ) DNA during genetic recombination and DNA repair, while the RuvA-RuvB complex plays an important role in the rescue of blocked DNA replication forks via replication fork reversal (RFR). RuvA specifically binds to HJ cruciform DNA, conferring on it an open structure. The RuvB hexamer acts as an ATP-dependent pump, pulling dsDNA into and through the RuvAB complex. HJ branch migration allows RuvC to scan DNA until it finds its consensus sequence, where it cleaves and resolves the cruciform DNA. This Alkaliphilus oremlandii (strain OhILAs) (Clostridium oremlandii (strain OhILAs)) protein is Holliday junction branch migration complex subunit RuvA.